We begin with the raw amino-acid sequence, 1234 residues long: MTQFTTSQQAAITHDGHDVLVSASAGSGKTTVLVERIIQKILKQHADITRMLIVTFTRAATAEMRTKIQTALKKALTERRHELSGEDRRHLANQIAMVNAAKISTLDAFSLQIVQTYYYVIDLDPGFRLLTDETERYMLQERVWDDLREQLYASDEAPAFEQLTANFSGDRDDSGLQDLMFELIRQAGATTDPKAYLEGLATPYAPEKWEATFSQQIWPRVKGQLLQIATSLTQASALANQLPNPIWYQQIQADLAPLQTLLETNAPTYDTVRSVLISHEFAAWSRISKGLDDADKDTKNAAKDLRDAAKKTWQNKLAPTFALAAEQIGDLLREAQPLVATLANVALKFEDALTAEKAARHVQDYSDIAHNALRILQQKDPQTGAPIADNYRASFDEVMVDEYQDISPLQEALLAAVSTTTPGDRFMVGDVKQSIYGFRLADPQLFIHKYQTFQDAPTDPAAPERIILAENFRSTKNVLAFTNLIFSQIMDPEVGDLSYDNAAALKYGALDYGDAHPAVKVLLYSKATSDEDSSDASELPGDADDNEPVDIATGQTQLVLAEIQRLINDPDAQLWDRQAQEYRRIHYRDITLLTRQTSQNSLIQTQFAAAGVPLFVADTKNFFKTTELMVMLALLKVIDNQKQDIPLVAVLRSPIVGLSADQLALIRLAAKQVPYYDAVTAFLQAEPKTPLAQRTHDMLTHFFNQLSHFRDLARENDLVTLLWAIYQDTGFLDYVGGTPGGSQRQANLQALIDRARTYEAGGFKGLFAFIHFITLMQKQDQDLAMPAQVDPDNDAVKLMTIHKSKGLEFPVVFLMQANKHFNMSDQTGTAILTKQGIGIKWLDPETRVEYELPQYQAAKAARQNQTLAEEMRLLYVALTRAQQRLYVVGATMSGNQLTSADKTVEKWAAAAEGEARVLAPQVRSGATSYLDWIGPALIRHPQARGLAETTIKPALVGDETEFTIEIDVNPQVTPTATPEKVSDDSGTMVDLSAWFKKAYPFQAATTTTGFQSVSEIKRAFDDPDTIDLVNADRFLGPKPPMRDLTAPAFLTETPSGISPAAIGTATHLLLQLVDLAKPITMASLRALRDQLTTTQVIAVDVAKHIDLTALIRFFETDLGRLLLAKPQQVHREVPFSMLLPADQVFEALADDPGEDVLIHGIIDGYVSDEQGVTLFDYKTDHNPNTAVLVDRYRGQLNLYAQALQDLQPKPVLHRYLVFLRTGTVVDLVASGAGK.

A UvrD-like helicase ATP-binding domain is found at 2-475 (TQFTTSQQAA…IILAENFRST (474 aa)). 23 to 30 (ASAGSGKT) is an ATP binding site. A UvrD-like helicase C-terminal domain is found at 507-806 (YGALDYGDAH…KLMTIHKSKG (300 aa)).

Belongs to the helicase family. AddA subfamily. In terms of assembly, heterodimer of AddA and AddB/RexB. The cofactor is Mg(2+).

It carries out the reaction Couples ATP hydrolysis with the unwinding of duplex DNA by translocating in the 3'-5' direction.. It catalyses the reaction ATP + H2O = ADP + phosphate + H(+). The heterodimer acts as both an ATP-dependent DNA helicase and an ATP-dependent, dual-direction single-stranded exonuclease. Recognizes the chi site generating a DNA molecule suitable for the initiation of homologous recombination. The AddA nuclease domain is required for chi fragment generation; this subunit has the helicase and 3' -&gt; 5' nuclease activities. This is ATP-dependent helicase/nuclease subunit A from Lacticaseibacillus paracasei (strain ATCC 334 / BCRC 17002 / CCUG 31169 / CIP 107868 / KCTC 3260 / NRRL B-441) (Lactobacillus paracasei).